Reading from the N-terminus, the 1530-residue chain is MSAPLGPRGRPAPTPAASQPPPQPEMPDLSHLTEEERKIILAVMDRQKKEEEKEQSVLKIKEEHKAQPTQWFPFSGITELVNNVLQPQQKQPNEKEPQTKLHQQFEMYKEQVKKMGEESQQQQEQKGDAPTCGICHKTKFADGCGHNCSYCQTKFCARCGGRVSLRSNKVMWVCNLCRKQQEILTKSGAWFYNSGSNTLQQPDQKVPRGLRNEEAPQEKKAKLHEQPQFQGAPGDLSVPAVEKGRAHGLTRQDTIKNGSGVKHQIASDMPSDRKRSPSVSRDQNRRYEQSEEREDYSQYVPSDGTMPRSPSDYADRRSQREPQFYEEPGHLNYRDSNRRGHRHSKEYIVDDEDVESRDEYERQRREEEYQARYRSDPNLARYPVKPQPYEEQMRIHAEVSRARHERRHSDVSLANAELEDSRISLLRMDRPSRQRSVSERRAAMENQRSYSMERTREAQGQSSYPQRTSNHSPPTPRRSPIPLDRPDMRRADSLRKQHHLDPSSAVRKTKREKMETMLRNDSLSSDQSESVRPPPPRPHKSKKGGKMRQVSLSSSEEELASTPEYTSCDDVELESESVSEKGDSQKGKRKTSEQGVLSDSNTRSERQKKRMYYGGHSLEEDLEWSEPQIKDSGVDTCSSTTLNEEHSHSDKHPVTWQPSKDGDRLIGRILLNKRLKDGSVPRDSGAMLGLKVVGGKMTESGRLCAFITKVKKGSLADTVGHLRPGDEVLEWNGRLLQGATFEEVYNIILESKPEPQVELVVSRPIGDIPRIPDSTHAQLESSSSSFESQKMDRPSISVTSPMSPGMLRDVPQFLSGQLSIKLWFDKVGHQLIVTILGAKDLPSREDGRPRNPYVKIYFLPDRSDKNKRRTKTVKKTLEPKWNQTFIYSPVHRREFRERMLEITLWDQARVREEESEFLGEILIELETALLDDEPHWYKLQTHDVSSLPLPRPSPYLPRRQLHGESPTRRLQRSKRISDSEVSDYDCEDGVGVVSDYRHNGRDLQSSTLSVPEQVMSSNHCSPSGSPHRVDVIGRTRSWSPSAPPPQRNVEQGHRGTRATGHYNTISRMDRHRVMDDHYSSDRDRSHPRTGSVQTSPSSTPGTGRRGRQLPQLPPKGTLERSAMDIEERNRQMKLNKYKQVAGSDPRLEQDYHSKYRSGWDPHRGADTVSTKSSDSDVSDVSAVSRTSSASRFSSTSYMSVQSERPRGNRKISVFTSKMQNRQMGVSGKNLTKSTSISGDMCSLEKNDGSQSDTAVGALGTSGKKRRSSIGAKMVAIVGLSRKSRSASQLSQTEGGGKKLRSTVQRSTETGLAVEMRNWMTRQASRESTDGSMNSYSSEGNLIFPGVRLASDSQFSDFLDGLGPAQLVGRQTLATPAMGDIQVGMMDKKGQLEVEIIRARGLVVKPGSKTLPAPYVKVYLLDNGVCIAKKKTKVARKTLEPLYQQLLSFEESPQGRVLQIIVWGDYGRMDHKSFMGVAQILLDELELSNMVIGWFKLFPPSSLVDPTLAPLTRRASQSSLESSTGPSYSRS.

A disordered region spans residues 1 to 34; it reads MSAPLGPRGRPAPTPAASQPPPQPEMPDLSHLTE. Residues 10-25 show a composition bias toward pro residues; sequence RPAPTPAASQPPPQPE. Positions 26 to 194 constitute a RabBD domain; it reads MPDLSHLTEE…TKSGAWFYNS (169 aa). The FYVE-type zinc-finger motif lies at 126-182; it reads KGDAPTCGICHKTKFADGCGHNCSYCQTKFCARCGGRVSLRSNKVMWVCNLCRKQQE. The Zn(2+) site is built by C132, C135, C148, C151, C156, C159, C174, and C177. Disordered regions lie at residues 195–608 and 632–655; these read GSNT…ERQK and SGVDTCSSTTLNEEHSHSDKHPVT. Basic and acidic residues-rich tracts occupy residues 210 to 225, 327 to 338, 357 to 375, 391 to 410, and 419 to 443; these read LRNEEAPQEKKAKLHE, EPGHLNYRDSNR, RDEYERQRREEEYQARYRS, EQMRIHAEVSRARHERRHSD, and EDSRISLLRMDRPSRQRSVSERRAA. S409 bears the Phosphoserine mark. The span at 458 to 472 shows a compositional bias: polar residues; sequence AQGQSSYPQRTSNHS. The span at 484–501 shows a compositional bias: basic and acidic residues; the sequence is DRPDMRRADSLRKQHHLD. Positions 519 to 530 are enriched in polar residues; it reads RNDSLSSDQSES. A compositionally biased stretch (basic residues) spans 537–546; the sequence is RPHKSKKGGK. Acidic residues predominate over residues 567 to 577; it reads SCDDVELESES. Basic and acidic residues-rich tracts occupy residues 578-592 and 643-653; these read VSEKGDSQKGKRKTS and NEEHSHSDKHP. A PDZ domain is found at 677–763; it reads DGSVPRDSGA…EPQVELVVSR (87 aa). A Phosphothreonine modification is found at T698. Residues 771–802 are disordered; it reads IPDSTHAQLESSSSSFESQKMDRPSISVTSPM. A phosphoserine mark is found at S800 and S803. The C2 1 domain maps to 814–937; it reads LSGQLSIKLW…ALLDDEPHWY (124 aa). Disordered stretches follow at residues 948 to 982, 1003 to 1122, 1130 to 1149, 1154 to 1187, 1242 to 1263, and 1282 to 1307; these read PLPRPSPYLPRRQLHGESPTRRLQRSKRISDSEVS, LQSS…ERSA, RQMKLNKYKQVAGSDPRLEQ, KYRSGWDPHRGADTVSTKSSDSDVSDVSAVSRTS, SLEKNDGSQSDTAVGALGTSGK, and KSRSASQLSQTEGGGKKLRSTVQRST. Over residues 1003–1024 the composition is skewed to polar residues; the sequence is LQSSTLSVPEQVMSSNHCSPSG. A compositionally biased stretch (basic and acidic residues) spans 1067-1086; it reads RMDRHRVMDDHYSSDRDRSH. The span at 1088-1101 shows a compositional bias: polar residues; sequence RTGSVQTSPSSTPG. A Phosphoserine modification is found at S1095. Positions 1154-1165 are enriched in basic and acidic residues; that stretch reads KYRSGWDPHRGA. Residue S1175 is modified to Phosphoserine. Residues 1178–1187 show a composition bias toward low complexity; the sequence is SDVSAVSRTS. S1251 is modified (phosphoserine). A C2 2 domain is found at 1376–1494; that stretch reads AMGDIQVGMM…ELSNMVIGWF (119 aa). Residues S1515 and S1518 each carry the phosphoserine modification.

Interacts with TSPOAP1 and RIMBP2. Interacts with PPFIA3 and PPFIA4. Interacts via its zinc finger with the first C2 domain of UNC13A. Forms a complex consisting of UNC13A, RIMS2 and RAB3A. Heterodimer with PCLO. Part of a ternary complex involving PCLO and EPAC2. Interacts with RAB3A and RAB3B that have been activated by GTP-binding. Interacts with RAB3C, RAB3D and RAB26. In terms of tissue distribution, detected in testis, pituitary and an insulinoma cell line. Detected at low levels in cerebellar cortex.

It localises to the synapse. The protein localises to the synaptosome. In terms of biological role, rab effector involved in exocytosis. May act as scaffold protein. Plays a role in dendrite formation by melanocytes. The polypeptide is Regulating synaptic membrane exocytosis protein 2 (Rims2) (Mus musculus (Mouse)).